The following is a 398-amino-acid chain: Phosphoglycerate kinase (398 aa).

Substrate-binding positions include Asp-23–Asn-25, Arg-38, His-61–Lys-64, Arg-122, and Arg-155. ATP-binding positions include Lys-206, Gly-297, Glu-328, and Gly-354–Ser-357.

This sequence belongs to the phosphoglycerate kinase family. In terms of assembly, monomer.

The protein localises to the cytoplasm. The catalysed reaction is (2R)-3-phosphoglycerate + ATP = (2R)-3-phospho-glyceroyl phosphate + ADP. Its pathway is carbohydrate degradation; glycolysis; pyruvate from D-glyceraldehyde 3-phosphate: step 2/5. This Clostridium botulinum (strain Okra / Type B1) protein is Phosphoglycerate kinase.